Consider the following 188-residue polypeptide: Ubiquitin-conjugating enzyme E2-21 kDa (188 aa).

A UBC core domain is found at 3–182; the sequence is STEKRLLKEY…VHYYIAKYSA (180 aa). Catalysis depends on C119, which acts as the Glycyl thioester intermediate.

It belongs to the ubiquitin-conjugating enzyme family.

It catalyses the reaction S-ubiquitinyl-[E1 ubiquitin-activating enzyme]-L-cysteine + [E2 ubiquitin-conjugating enzyme]-L-cysteine = [E1 ubiquitin-activating enzyme]-L-cysteine + S-ubiquitinyl-[E2 ubiquitin-conjugating enzyme]-L-cysteine.. Its pathway is protein modification; protein ubiquitination. Functionally, catalyzes the covalent attachment of ubiquitin to other proteins. Essential for peroxisome biogenesis. Required for UBC4-independent ubiquitination of PEX5. This is Ubiquitin-conjugating enzyme E2-21 kDa (PEX4) from Pichia angusta (Yeast).